The primary structure comprises 590 residues: Aspartate--tRNA(Asp/Asn) ligase (590 aa).

Glutamate 176 contacts L-aspartate. The aspartate stretch occupies residues 200-203 (QLFK). L-aspartate is bound by residues arginine 222 and histidine 451. 222-224 (RDE) contacts ATP. Glutamate 485 contributes to the ATP binding site. Arginine 492 serves as a coordination point for L-aspartate. Residue 537–540 (GIDR) coordinates ATP.

It belongs to the class-II aminoacyl-tRNA synthetase family. Type 1 subfamily. Homodimer.

It localises to the cytoplasm. The enzyme catalyses tRNA(Asx) + L-aspartate + ATP = L-aspartyl-tRNA(Asx) + AMP + diphosphate. Its function is as follows. Aspartyl-tRNA synthetase with relaxed tRNA specificity since it is able to aspartylate not only its cognate tRNA(Asp) but also tRNA(Asn). Reaction proceeds in two steps: L-aspartate is first activated by ATP to form Asp-AMP and then transferred to the acceptor end of tRNA(Asp/Asn). The sequence is that of Aspartate--tRNA(Asp/Asn) ligase from Ehrlichia ruminantium (strain Gardel).